The following is a 363-amino-acid chain: Probable L-tyrosine/L-aspartate decarboxylase (363 aa).

K224 carries the N6-(pyridoxal phosphate)lysine modification.

It belongs to the group II decarboxylase family. MfnA subfamily. Requires pyridoxal 5'-phosphate as cofactor.

The enzyme catalyses L-tyrosine + H(+) = tyramine + CO2. It catalyses the reaction L-aspartate + H(+) = beta-alanine + CO2. It participates in cofactor biosynthesis; methanofuran biosynthesis. The protein operates within cofactor biosynthesis; coenzyme A biosynthesis. Catalyzes the decarboxylation of L-tyrosine to produce tyramine for methanofuran biosynthesis. Can also catalyze the decarboxylation of L-aspartate to produce beta-alanine for coenzyme A (CoA) biosynthesis. The polypeptide is Probable L-tyrosine/L-aspartate decarboxylase (Methanosphaerula palustris (strain ATCC BAA-1556 / DSM 19958 / E1-9c)).